Here is a 513-residue protein sequence, read N- to C-terminus: Alpha-amylase mde5 (513 aa).

An N-terminal signal peptide occupies residues 1 to 25 (MKHNEVFGWTLKVLSFLLVVIPANA). Cys52 and Cys60 are joined by a disulfide. Trp105 provides a ligand contact to substrate. Residue Asn143 participates in Ca(2+) binding. His144 is a binding site for substrate. Residue Asn162 is glycosylated (N-linked (GlcNAc...) asparagine). Cys171 and Cys184 are disulfide-bonded. Ca(2+)-binding residues include Glu182 and Asp195. Arg224 is a substrate binding site. Positions 226, 230, and 250 each coordinate Ca(2+). Asp226 acts as the Nucleophile in catalysis. 229 to 230 (KH) lines the substrate pocket. The active-site Proton donor is the Glu250. Gly254 serves as a coordination point for substrate. A disulfide bond links Cys260 and Cys304. Asp318 is a substrate binding site. N-linked (GlcNAc...) asparagine glycosylation occurs at Asn357. Arg365 is a binding site for substrate. A disulfide bond links Cys454 and Cys488.

Belongs to the glycosyl hydrolase 13 family. Ca(2+) serves as cofactor.

It localises to the endoplasmic reticulum. It catalyses the reaction Endohydrolysis of (1-&gt;4)-alpha-D-glucosidic linkages in polysaccharides containing three or more (1-&gt;4)-alpha-linked D-glucose units.. This Schizosaccharomyces pombe (strain 972 / ATCC 24843) (Fission yeast) protein is Alpha-amylase mde5 (mde5).